We begin with the raw amino-acid sequence, 214 residues long: Rhodanese-like domain-containing protein 10 (214 aa).

The 125-residue stretch at 58–182 (ASEGYILLDV…VSEGDFPEIE (125 aa)) folds into the Rhodanese domain. C142 acts as the Cysteine persulfide intermediate in catalysis. A helical transmembrane segment spans residues 190 to 206 (ATIGGVSFYLLKLLVLL).

The protein resides in the membrane. This Arabidopsis thaliana (Mouse-ear cress) protein is Rhodanese-like domain-containing protein 10 (STR10).